A 472-amino-acid chain; its full sequence is D-2-hydroxyglutarate dehydrogenase (472 aa).

One can recognise an FAD-binding PCMH-type domain in the interval 36 to 215 (WTPNPLAIAL…VEATLRLTDP (180 aa)). (R)-2-hydroxyglutarate is bound by residues Arg323, Thr327, and Lys337. Residues Arg323, Thr327, and Lys337 each contribute to the (R)-malate site. The Zn(2+) site is built by His372 and His379. Asn381 contributes to the (R)-2-hydroxyglutarate binding site. Glu418 contributes to the Zn(2+) binding site. His419 contacts (R)-2-hydroxyglutarate. His419 contacts (R)-malate.

This sequence belongs to the FAD-binding oxidoreductase/transferase type 4 family. As to quaternary structure, homodimer. FAD serves as cofactor.

The enzyme catalyses (R)-2-hydroxyglutarate + A = 2-oxoglutarate + AH2. It catalyses the reaction (R)-malate + A = oxaloacetate + AH2. With respect to regulation, activated by Zn(2+) ions. Functionally, catalyzes the dehydrogenation of (R)-2-hydroxyglutarate (D-2-hydroxyglutarate) to 2-oxoglutarate. Also has a low activity on D-malate in vitro. Is functionally tied to L-serine biosynthesis, via its coupling with the D-3-phosphoglycerate dehydrogenase SerA, encoded by the adjacent gene in the locus. Active in vitro with the artificial electron acceptor 2,6-dichlorophenolindophenol (DCPIP), but not with NAD, NADP, or cytochrome c. Also displays a very low oxidase activity in vitro on D-2-hydroxyglutarate and L-2-hydroxyglutarate with O2 as the electron acceptor, but this activity is most likely not physiological. This is D-2-hydroxyglutarate dehydrogenase from Xanthomonas citri pv. viticola (strain LMG 965 / NCPPB 2475 / ICMP 3867 / CFBP 7660) (Xanthomonas campestris pv. viticola).